Reading from the N-terminus, the 162-residue chain is ATP synthase subunit b (162 aa).

A helical membrane pass occupies residues 6–26 (PDIGLLFWMLLSFGIVFFVAA).

Belongs to the ATPase B chain family. In terms of assembly, F-type ATPases have 2 components, F(1) - the catalytic core - and F(0) - the membrane proton channel. F(1) has five subunits: alpha(3), beta(3), gamma(1), delta(1), epsilon(1). F(0) has three main subunits: a(1), b(2) and c(10-14). The alpha and beta chains form an alternating ring which encloses part of the gamma chain. F(1) is attached to F(0) by a central stalk formed by the gamma and epsilon chains, while a peripheral stalk is formed by the delta and b chains.

Its subcellular location is the cell inner membrane. In terms of biological role, f(1)F(0) ATP synthase produces ATP from ADP in the presence of a proton or sodium gradient. F-type ATPases consist of two structural domains, F(1) containing the extramembraneous catalytic core and F(0) containing the membrane proton channel, linked together by a central stalk and a peripheral stalk. During catalysis, ATP synthesis in the catalytic domain of F(1) is coupled via a rotary mechanism of the central stalk subunits to proton translocation. Component of the F(0) channel, it forms part of the peripheral stalk, linking F(1) to F(0). This is ATP synthase subunit b from Azobacteroides pseudotrichonymphae genomovar. CFP2.